The following is a 1036-amino-acid chain: Zinc finger protein 532 (1036 aa).

4 disordered regions span residues 26-92 (PKAA…LHNG), 106-206 (GAKS…EAES), 220-265 (RKAE…PSSK), and 281-362 (AASD…KVRI). Basic and acidic residues predominate over residues 32-52 (SGHDDHESHIKQNAHVDDDSH). Phosphoserine is present on residues serine 130, serine 133, and serine 134. A compositionally biased stretch (acidic residues) spans 136–151 (EEFEDDEKIEVDDPPD). Lysine 175 carries the post-translational modification N6-acetyllysine. The span at 182 to 193 (ENSSKTGVSTSG) shows a compositional bias: polar residues. 2 stretches are compositionally biased toward basic and acidic residues: residues 194-205 (HTDKNKVKREAE) and 220-249 (RKAE…EKSD). The segment covering 253–265 (AAAASSKTKPSSK) has biased composition (low complexity). Basic and acidic residues predominate over residues 302-314 (EVNDSPKAADKSP). 2 positions are modified to phosphoserine: serine 306 and serine 313. The segment covering 336–353 (SVSSENSSKGSPSSPVGS) has biased composition (low complexity). Serine 433 is modified (phosphoserine). Glycyl lysine isopeptide (Lys-Gly) (interchain with G-Cter in SUMO2) cross-links involve residues lysine 458 and lysine 515. The C2H2-type 1; degenerate zinc-finger motif lies at 615–634 (YKCLECGDAFALEKSLSQHY). A C2H2-type 2; degenerate zinc finger spans residues 751–775 (LKCLECNEVFQDEPSLATHFQHAAD). The C2H2-type 3 zinc-finger motif lies at 784-807 (HPCRQCDKSFSSSHSLCRHNRIKH). The C2H2-type 4; degenerate zinc-finger motif lies at 814–840 (YACSHCPDSRRTFTKRLMLERHIQLMH). The interval 847–877 (VKELSDDAGDVTNDEEEEAEIKEDAKVPSPK) is disordered. Acidic residues predominate over residues 852–867 (DDAGDVTNDEEEEAEI). Basic and acidic residues predominate over residues 868–877 (KEDAKVPSPK). Serine 875 carries the phosphoserine modification. Glycyl lysine isopeptide (Lys-Gly) (interchain with G-Cter in SUMO2) cross-links involve residues lysine 879 and lysine 902. 2 C2H2-type zinc fingers span residues 938-961 (HQCR…FIVH) and 999-1021 (RKCK…MRTH). Positions 966-1000 (PQPVSKQNGAGEDSQQENKPSPEDEAAEGAASDRK) are disordered.

The protein belongs to the krueppel C2H2-type zinc-finger protein family.

The protein localises to the nucleus. Functionally, may be involved in transcriptional regulation. The protein is Zinc finger protein 532 (Znf532) of Mus musculus (Mouse).